We begin with the raw amino-acid sequence, 752 residues long: Catalase-peroxidase (752 aa).

The tract at residues 1–20 (MENELVSKVKAPVPGNQTNT) is disordered. The segment at residues 111-234 (WHSAGTYRIG…LGAVQMGLIY (124 aa)) is a cross-link (tryptophyl-tyrosyl-methioninium (Trp-Tyr) (with M-260)). Residue His-112 is the Proton acceptor of the active site. Positions 234–260 (YVNPEGPNGKPDPAAAAVDIRETFARM) form a cross-link, tryptophyl-tyrosyl-methioninium (Tyr-Met) (with W-111). His-275 lines the heme b pocket.

This sequence belongs to the peroxidase family. Peroxidase/catalase subfamily. Homodimer or homotetramer. It depends on heme b as a cofactor. Formation of the three residue Trp-Tyr-Met cross-link is important for the catalase, but not the peroxidase activity of the enzyme.

The catalysed reaction is H2O2 + AH2 = A + 2 H2O. It carries out the reaction 2 H2O2 = O2 + 2 H2O. In terms of biological role, bifunctional enzyme with both catalase and broad-spectrum peroxidase activity. This chain is Catalase-peroxidase, found in Koribacter versatilis (strain Ellin345).